Here is a 237-residue protein sequence, read N- to C-terminus: Bax inhibitor 1 (237 aa).

Topologically, residues 1 to 29 (MNIFDRKINFDALLKFSHITPSTQQHLKK) are cytoplasmic. Lysine 7 participates in a covalent cross-link: Glycyl lysine isopeptide (Lys-Gly) (interchain with G-Cter in ubiquitin). Residues 30-50 (VYASFALCMFVAAAGAYVHVV) form a helical membrane-spanning segment. Residues 51 to 52 (TH) are Lumenal-facing. Residues 53-73 (FIQAGLLSALGSLALMIWLMA) traverse the membrane as a helical segment. At 74 to 86 (TPHSHETEQKRLG) the chain is on the cytoplasmic side. The chain crosses the membrane as a helical span at residues 87–107 (LLAGFAFLTGVGLGPALELCI). The Lumenal portion of the chain corresponds to 108–112 (AVNPS). Residues 113–133 (ILPTAFMGTAMIFTCFSLSAL) traverse the membrane as a helical segment. The Cytoplasmic segment spans residues 134-139 (YARRRS). Residues 140–160 (YLFLGGILMSAMSLMLLSSLG) traverse the membrane as a helical segment. Residues 161–166 (NLFFGS) are Lumenal-facing. The chain crosses the membrane as a helical span at residues 167-187 (IWLFQANLYLGLLVMCGFVLF). At 188–206 (DTQLIIEKAEHGDKDYIWH) the chain is on the cytoplasmic side. The segment at residues 207-227 (CVDLFLDFVTLFRKLMLILAF) is an intramembrane region (helical). At 228-237 (NEKDKKKEKK) the chain is on the cytoplasmic side.

It belongs to the BI1 family. As to quaternary structure, interacts with BCL2. Interacts with BCL2L1. Interacts with ERN1. In terms of processing, ubiquitinated by BFAR, leading to proteasomal degradation. In terms of tissue distribution, highly abundant in adult testis.

It is found in the endoplasmic reticulum membrane. Functionally, endoplasmic reticulum (ER)-resident protein that confers cellular protection as an anti-apoptotic protein by limiting multiple stress-inducing pathways surrounding the endoplasmic reticulum and mitochondria. Inhibits the activities of the key sensor for the endoplasmic reticulum unfolded protein response IRE1alpha/ERN1 both directly and by blocking BAX/BAK binding. Modulates ER calcium homeostasis by acting as a calcium-leak channel. Negatively regulates autophagy and autophagosome formation, especially during periods of nutrient deprivation, and reduces cell survival during starvation. The protein is Bax inhibitor 1 (Tmbim6) of Mus musculus (Mouse).